A 414-amino-acid polypeptide reads, in one-letter code: Tryptophan synthase beta chain (414 aa).

Positions 1–28 (MVSTISRQDQNNNDDLNQPSKEGRFGKY) are disordered. The segment covering 8 to 18 (QDQNNNDDLNQ) has biased composition (low complexity). The residue at position 108 (K108) is an N6-(pyridoxal phosphate)lysine.

Belongs to the TrpB family. In terms of assembly, tetramer of two alpha and two beta chains. Pyridoxal 5'-phosphate serves as cofactor.

It catalyses the reaction (1S,2R)-1-C-(indol-3-yl)glycerol 3-phosphate + L-serine = D-glyceraldehyde 3-phosphate + L-tryptophan + H2O. The protein operates within amino-acid biosynthesis; L-tryptophan biosynthesis; L-tryptophan from chorismate: step 5/5. Functionally, the beta subunit is responsible for the synthesis of L-tryptophan from indole and L-serine. This chain is Tryptophan synthase beta chain, found in Prochlorococcus marinus subsp. pastoris (strain CCMP1986 / NIES-2087 / MED4).